Consider the following 718-residue polypeptide: MQYSIEINKNTEIFDIDKVAKQATGVLMRQGKSVVLATVAREEKQVEEDFLPLTVQYIEKAYAAGKIPGGYVKRETKPSDAETLTARIIDRSLRPLFPKGYAYPTQIVVMVLSADPKVDLQVMSLNAASVALYLSDIPMKAPVCGVRIGKIDGNFILNPNNEELQNSTLDLYVAGVKDELLMIEMRALPDQKENEIFIEAPYADVLTQTTSQNMNELSEDEILEALNLAQKAILNGSNAYEEAFSKHKKNSQIELKNEIEHPEILAFIENNFQKQIKKAINQMAKSERASELNKIAKEILNLEIAKDWSEESILNTLAKVKRKLIREQILNEGKRADGRSLNEVRPISIETNILPNAHGSCLFTRGQTQALVVATLGGENDAQMIDLLTEKNPISERFMVNYNFPGFSVGEASPIKAPGRRELGHGNLAKRALYPSVDENYPYVIRLVSEILESNGSSSMATVCGGSLALKAAGVPSLKLVAGVAMGLIFEDNKYAVLTDIMGLEDHDGDMDFKVAGSKDGITALQMDIKLGGIDQETLKQALYQAKEGRIHILNIMEEATKEIIVNEEVLPKLELFSVDPSKIVDIIGQAGKTIKEIIEKFGVSIDLDREKGEVKIAGSQNEQIKAAKDYIINITSSQKGTKKGSKDKDISDFELGQEFQGIVKKIAPFGAFVELKNGVDGLLHSSKIKHLDLSENQSLKVKISEIKNGKISVDLCE.

Mg(2+) contacts are provided by D506 and D512. The region spanning 572-632 is the KH domain; sequence PKLELFSVDP…EQIKAAKDYI (61 aa). The 62-residue stretch at 657-718 folds into the S1 motif domain; sequence GQEFQGIVKK…NGKISVDLCE (62 aa).

It belongs to the polyribonucleotide nucleotidyltransferase family. Mg(2+) is required as a cofactor.

It localises to the cytoplasm. It carries out the reaction RNA(n+1) + phosphate = RNA(n) + a ribonucleoside 5'-diphosphate. Its function is as follows. Involved in mRNA degradation. Catalyzes the phosphorolysis of single-stranded polyribonucleotides processively in the 3'- to 5'-direction. This chain is Polyribonucleotide nucleotidyltransferase, found in Campylobacter jejuni subsp. doylei (strain ATCC BAA-1458 / RM4099 / 269.97).